Reading from the N-terminus, the 173-residue chain is Co-chaperone protein HscB homolog (173 aa).

The J domain occupies 5-77 (CHFAQFDLQP…PRRALYLLTL (73 aa)).

This sequence belongs to the HscB family. As to quaternary structure, interacts with HscA and stimulates its ATPase activity.

Functionally, co-chaperone involved in the maturation of iron-sulfur cluster-containing proteins. Seems to help targeting proteins to be folded toward HscA. The chain is Co-chaperone protein HscB homolog from Pseudomonas aeruginosa (strain UCBPP-PA14).